We begin with the raw amino-acid sequence, 223 residues long: Holliday junction branch migration complex subunit RuvA (223 aa).

Residues 1-64 (MIGKLTGRLD…EDLLQLFGFL (64 aa)) are domain I. Residues 65 to 143 (SPYEKEWHRL…AVMAMGGTLD (79 aa)) are domain II. The tract at residues 144 to 171 (DAMDDVVDDMPGESAAPAPAPQPRAPKR) is flexible linker. Residues 148-177 (DVVDDMPGESAAPAPAPQPRAPKRPASNAQ) are disordered. A domain III region spans residues 172–223 (PASNAQAEALSALQNLGYGPSDAAQAVAQAAESASNTPELIRAALRLLAPKE).

The protein belongs to the RuvA family. As to quaternary structure, homotetramer. Forms an RuvA(8)-RuvB(12)-Holliday junction (HJ) complex. HJ DNA is sandwiched between 2 RuvA tetramers; dsDNA enters through RuvA and exits via RuvB. An RuvB hexamer assembles on each DNA strand where it exits the tetramer. Each RuvB hexamer is contacted by two RuvA subunits (via domain III) on 2 adjacent RuvB subunits; this complex drives branch migration. In the full resolvosome a probable DNA-RuvA(4)-RuvB(12)-RuvC(2) complex forms which resolves the HJ.

It is found in the cytoplasm. In terms of biological role, the RuvA-RuvB-RuvC complex processes Holliday junction (HJ) DNA during genetic recombination and DNA repair, while the RuvA-RuvB complex plays an important role in the rescue of blocked DNA replication forks via replication fork reversal (RFR). RuvA specifically binds to HJ cruciform DNA, conferring on it an open structure. The RuvB hexamer acts as an ATP-dependent pump, pulling dsDNA into and through the RuvAB complex. HJ branch migration allows RuvC to scan DNA until it finds its consensus sequence, where it cleaves and resolves the cruciform DNA. The polypeptide is Holliday junction branch migration complex subunit RuvA (Jannaschia sp. (strain CCS1)).